Reading from the N-terminus, the 659-residue chain is Pentatricopeptide repeat-containing protein At3g26782, mitochondrial (659 aa).

The N-terminal 24 residues, 1–24 (MKVRSKKALFCSVSRLLHTERHTE), are a transit peptide targeting the mitochondrion. PPR repeat units follow at residues 40 to 74 (DVFS…SLYP), 75 to 109 (TRSS…GYQS), 110 to 144 (DIFV…NIVS), 145 to 171 (WTSM…LLVD), 182 to 216 (DSMG…GFDR), 217 to 249 (GVSV…IVDK), 250 to 284 (DRVS…KVVT), 286 to 320 (NAIT…GLED), 321 to 351 (DVIV…MKNK), 352 to 386 (NVRS…GVRP), 387 to 422 (NYIT…GVEP), and 423 to 453 (GLEH…MKMK). The segment at 458–533 (IWSSLLAACR…PPGFSLLELN (76 aa)) is type E motif. A type E(+) motif region spans residues 534-564 (GEVHVFLIGDEEHPQREKIYEFLAELNRKLL). Residues 565–659 (EAGYVSNTSS…DGGCSCGDYW (95 aa)) form a type DYW motif region.

This sequence belongs to the PPR family. PCMP-H subfamily.

It localises to the mitochondrion. This Arabidopsis thaliana (Mouse-ear cress) protein is Pentatricopeptide repeat-containing protein At3g26782, mitochondrial (PCMP-H34).